Reading from the N-terminus, the 830-residue chain is MELNRRDFMKANAAVAAAAAAGITIPVKNVHAADDDMGIRWDKAPCRYCGTGCSVLVGTKDGRVVATQGDPDAEVNRGLNCIKGYFLSKIMYGADRVQTPLLRMKDGKFHKEGDFTPVSWDQAFTVMADKIKAILKEKKDPNAIGMFSSGQTTIFEGYAKVKLWKAGLRSNTIDPNARHCMASAAVAFLRTFGMDEPMGCYNDIEKTDAFVLWGSNMAEMHPILWSRISDRRLSSDKVKVVVMSTFEHRSFELADTPIIFKPHSDLAILNYIANYIIQNDKVNWDFVNKHTKFKRGETDIGYGLRPEHPLEVAAKNRKTAGKMYDSDFEEFKKIVAPYTLEEAHRISGVPKDQLETLAKMYADPQQNLVSFWTMGFNQHTRGVWVNHMVYNVHLLTGKISKPGCGPFSLTGQPSACGTAREVGTFVHRLPADMVVTNPKHVEIAENIWKLPKGTISNKPGFPAVQQSRALKDGKLNFLWQLCTNNMQGGPNINEEIFPGWRNPDNLIVVSDPYPSASAVAADLILPTCMWVEKEGAYGNAERRTQFWRQQVKGPGQSRSDLWQIVEFSKYFKTEEVWSEELLAQMPEYRGKTLYEVLYLNGEVNKFQTPTNVPGYINDEAEDFGFYLQKGLFEEYASFGRGHGHDLADFDTYHQVRGLRWPVVDGKETLWRYREGYDPYVKAGEEVSFYGYPDKKAIILGVPYEAPAESPDEEYDLWLCTGRVLEHWHTGTMTRRVPELHKAFPNNLCWMHPTDAKKRGLRHGDKVKLITRRGEMISHLDTRGRNKCPEGLIYTTFFDAGQLANKLTLDATDPISGETDYKKCAVKVVKA.

Positions 1 to 32 (MELNRRDFMKANAAVAAAAAAGITIPVKNVHA) form a signal peptide, tat-type signal. Residues 39–95 (IRWDKAPCRYCGTGCSVLVGTKDGRVVATQGDPDAEVNRGLNCIKGYFLSKIMYGAD) enclose the 4Fe-4S Mo/W bis-MGD-type domain. Positions 46, 49, 53, and 81 each coordinate [4Fe-4S] cluster. Residues Lys83, Gln151, Asn176, Cys180, 213–220 (WGSNMAEM), 244–248 (STFEH), Met374, Gln378, Asn484, 510–511 (SD), Lys533, Asp560, and 720–729 (TGRVLEHWHT) contribute to the Mo-bis(molybdopterin guanine dinucleotide) site. Phe796 is a substrate binding site. 2 residues coordinate Mo-bis(molybdopterin guanine dinucleotide): Asn804 and Lys821.

The protein belongs to the prokaryotic molybdopterin-containing oxidoreductase family. NasA/NapA/NarB subfamily. Component of the periplasmic nitrate reductase NapAB complex composed of NapA and NapB. Requires [4Fe-4S] cluster as cofactor. The cofactor is Mo-bis(molybdopterin guanine dinucleotide). Predicted to be exported by the Tat system. The position of the signal peptide cleavage has not been experimentally proven.

The protein resides in the periplasm. It catalyses the reaction 2 Fe(II)-[cytochrome] + nitrate + 2 H(+) = 2 Fe(III)-[cytochrome] + nitrite + H2O. Functionally, catalytic subunit of the periplasmic nitrate reductase complex NapAB. Receives electrons from NapB and catalyzes the reduction of nitrate to nitrite. The protein is Periplasmic nitrate reductase of Mannheimia succiniciproducens (strain KCTC 0769BP / MBEL55E).